Reading from the N-terminus, the 245-residue chain is 5-oxoprolinase subunit A (245 aa).

This sequence belongs to the LamB/PxpA family. Forms a complex composed of PxpA, PxpB and PxpC.

The enzyme catalyses 5-oxo-L-proline + ATP + 2 H2O = L-glutamate + ADP + phosphate + H(+). Catalyzes the cleavage of 5-oxoproline to form L-glutamate coupled to the hydrolysis of ATP to ADP and inorganic phosphate. The sequence is that of 5-oxoprolinase subunit A from Erwinia tasmaniensis (strain DSM 17950 / CFBP 7177 / CIP 109463 / NCPPB 4357 / Et1/99).